A 186-amino-acid polypeptide reads, in one-letter code: Ribosome-recycling factor (186 aa).

The protein belongs to the RRF family.

Its subcellular location is the cytoplasm. Functionally, responsible for the release of ribosomes from messenger RNA at the termination of protein biosynthesis. May increase the efficiency of translation by recycling ribosomes from one round of translation to another. This Rickettsia africae (strain ESF-5) protein is Ribosome-recycling factor.